A 211-amino-acid chain; its full sequence is FMN-dependent NADH:quinone oxidoreductase 2 (211 aa).

17–19 contacts FMN; it reads SYS.

It belongs to the azoreductase type 1 family. As to quaternary structure, homodimer. FMN is required as a cofactor.

It carries out the reaction 2 a quinone + NADH + H(+) = 2 a 1,4-benzosemiquinone + NAD(+). The enzyme catalyses N,N-dimethyl-1,4-phenylenediamine + anthranilate + 2 NAD(+) = 2-(4-dimethylaminophenyl)diazenylbenzoate + 2 NADH + 2 H(+). With respect to regulation, strongly inhibited by Pb(2+) and weakly inhibited by Cu(2+), Hg(2+) and Fe(2+). Stable in presence of Ag(+). Functionally, quinone reductase that provides resistance to thiol-specific stress caused by electrophilic quinones. Contributes to resistance to 2-methylhydroquinone (2-MHQ) and catechol. Exhibits NADH-dependent 2,6-dichloroindophenol (DCIP) oxidoreductase activity. Its function is as follows. Also exhibits azoreductase activity. Catalyzes the reductive cleavage of the azo bond in aromatic azo compounds to the corresponding amines. Can reduce methyl red. The polypeptide is FMN-dependent NADH:quinone oxidoreductase 2 (Bacillus subtilis (strain 168)).